The sequence spans 104 residues: Membrane magnesium transporter (104 aa).

At 1-2 (MN) the chain is on the cytoplasmic side. Residues 3-23 (LGFLVGVFGVLILSHAAYSTI) form a helical membrane-spanning segment. The Lumenal segment spans residues 24 to 40 (QYRGLLKIMEEEFSRPP). The helical transmembrane segment at 41-61 (INVILELIIGLALCMWAALTF) threads the bilayer. The Cytoplasmic segment spans residues 62–104 (PGKFLSIHPDSDENRAVFLPDNSDFMIFNHRGRLFPPQIDMKF).

This sequence belongs to the membrane magnesium transporter (TC 1.A.67) family. As to quaternary structure, component of the ER membrane protein complex (EMC).

It is found in the endoplasmic reticulum membrane. The protein localises to the golgi apparatus membrane. Its subcellular location is the early endosome membrane. Mediates Mg(2+) transport. This is Membrane magnesium transporter from Arabidopsis thaliana (Mouse-ear cress).